Here is a 338-residue protein sequence, read N- to C-terminus: mRNA decay activator protein ZFP36L1 (338 aa).

The tract at residues 1–111 (MTTTLVSATI…QKQPGGGQVN (111 aa)) is necessary and sufficient for the association with mRNA decay enzymes and mRNA decay activation. Serine 54 bears the Phosphoserine; by MAPKAPK2 mark. Serine 90 bears the Phosphoserine; by PKB/AKT1 mark. Serine 92 carries the phosphoserine; by PKB/AKT1 and MAPKAPK2 modification. The tract at residues 93-113 (EGGERLLPTQKQPGGGQVNSS) is disordered. 2 C3H1-type zinc fingers span residues 114–142 (RYKT…HGIH) and 152–180 (KYKT…HNAE). Residues 185 to 338 (LAGARDLSAD…IFSRLSISDD (154 aa)) form a necessary for mRNA decay activation region. Phosphoserine; by PKB/AKT1 and MAPKAPK2 is present on serine 203. A disordered region spans residues 273–338 (SPTTFLFRPM…IFSRLSISDD (66 aa)). Residues 296 to 318 (QDSLSDQEGYLSSSSSSHSGSDS) are compositionally biased toward low complexity. A Phosphoserine modification is found at serine 318. The residue at position 334 (serine 334) is a Phosphoserine; by RPS6KA1.

In terms of assembly, associates with the cytoplasmic CCR4-NOT deadenylase and RNA exosome complexes to trigger ARE-containing mRNA deadenylation and decay processes. Interacts with CNOT1. Interacts (via N-terminus) with CNOT6. Interacts with CNOT7; this interaction is inhibited in response to phorbol 12-myristate 13-acetate (PMA) treatment in a p38 MAPK-dependent manner. Interacts with DCP1A. Interacts (via N-terminus) with DCP2. Interacts (via N-terminus) with EXOSC2. Interacts with XRN1. Interacts (via phosphorylated form) with YWHAB; this interaction occurs in a protein kinase AKT1-dependent manner. Interacts (via phosphorylated form) with YWHAZ; this interaction occurs in a p38 MAPK- and AKT-signaling pathways. Post-translationally, phosphorylated. Phosphorylated by RPS6KA1 at Ser-334 upon phorbol 12-myristate 13-acetate (PMA) treatment; this phosphorylation results in dissociation of the CCR4-NOT deadenylase complex and induces p38 MAPK-mediated stabilization of the low-density lipoprotein receptor LDLR mRNA. Phosphorylated by protein kinase AKT1 at Ser-92 and Ser-203 in response to insulin; these phosphorylations stabilize ZFP36L1, increase the association with 14-3-3 proteins and mediate ARE-containing mRNA stabilization. AKT1-mediated phosphorylation at Ser-92 does not impair ARE-containing RNA-binding. Phosphorylated at Ser-54, Ser-92 and Ser-203 by MAPKAPK2; these phosphorylations increase the association with 14-3-3 proteins and mediate ARE-containing mRNA stabilization in a protein kinase AKT1-independent manner. MAPKAPK2-mediated phosphorylations at Ser-54, Ser-92 and Ser-203 do not impair ARE-containing RNA-binding. Phosphorylations increase the association with 14-3-3 proteins and mediate ARE-containing mRNA stabilization during early adipogenesis in a p38 MAPK- and AKT-dependent manner. Ubiquitinated. Ubiquitination leads to proteasomal degradation, a process inhibited by phosphorylations at Ser-90, Ser-92 and Ser-203. In terms of tissue distribution, expressed mainly in the basal epidermal layer, weakly in the suprabasal epidermal layers. Expressed in epidermal keratinocytes (at protein level). Expressed in osteoblasts.

It localises to the nucleus. The protein resides in the cytoplasm. The protein localises to the cytoplasmic granule. It is found in the P-body. Its function is as follows. Zinc-finger RNA-binding protein that destabilizes several cytoplasmic AU-rich element (ARE)-containing mRNA transcripts by promoting their poly(A) tail removal or deadenylation, and hence provide a mechanism for attenuating protein synthesis. Acts as a 3'-untranslated region (UTR) ARE mRNA-binding adapter protein to communicate signaling events to the mRNA decay machinery. Functions by recruiting the CCR4-NOT deadenylase complex and components of the cytoplasmic RNA decay machinery to the bound ARE-containing mRNAs, and hence promotes ARE-mediated mRNA deadenylation and decay processes. Also induces the degradation of ARE-containing mRNAs even in absence of poly(A) tail. Binds to 3'-UTR ARE of numerous mRNAs. Positively regulates early adipogenesis by promoting ARE-mediated mRNA decay of immediate early genes (IEGs). Promotes ARE-mediated mRNA decay of mineralocorticoid receptor NR3C2 mRNA in response to hypertonic stress. Negatively regulates hematopoietic/erythroid cell differentiation by promoting ARE-mediated mRNA decay of the transcription factor STAT5B mRNA. Positively regulates monocyte/macrophage cell differentiation by promoting ARE-mediated mRNA decay of the cyclin-dependent kinase CDK6 mRNA. Promotes degradation of ARE-containing pluripotency-associated mRNAs in embryonic stem cells (ESCs), such as NANOG, through a fibroblast growth factor (FGF)-induced MAPK-dependent signaling pathway, and hence attenuates ESC self-renewal and positively regulates mesendoderm differentiation. May play a role in mediating pro-apoptotic effects in malignant B-cells by promoting ARE-mediated mRNA decay of BCL2 mRNA. In association with ZFP36L2 maintains quiescence on developing B lymphocytes by promoting ARE-mediated decay of several mRNAs encoding cell cycle regulators that help B cells progress through the cell cycle, and hence ensuring accurate variable-diversity-joining (VDJ) recombination and functional immune cell formation. Together with ZFP36L2 is also necessary for thymocyte development and prevention of T-cell acute lymphoblastic leukemia (T-ALL) transformation by promoting ARE-mediated mRNA decay of the oncogenic transcription factor NOTCH1 mRNA. Participates in the delivery of target ARE-mRNAs to processing bodies (PBs). In addition to its cytosolic mRNA-decay function, plays a role in the regulation of nuclear mRNA 3'-end processing; modulates mRNA 3'-end maturation efficiency of the DLL4 mRNA through binding with an ARE embedded in a weak noncanonical polyadenylation (poly(A)) signal in endothelial cells. Also involved in the regulation of stress granule (SG) and P-body (PB) formation and fusion. Plays a role in vasculogenesis and endocardial development. Plays a role in the regulation of keratinocyte proliferation, differentiation and apoptosis. Plays a role in myoblast cell differentiation. The chain is mRNA decay activator protein ZFP36L1 from Homo sapiens (Human).